A 239-amino-acid chain; its full sequence is Serine protease SplF (239 aa).

Positions 1-36 are cleaved as a signal peptide; that stretch reads MNKNIIIKSIAALTILTSVTGVGTTMVEGIQQTAKA. Active-site charge relay system residues include His-75, Asp-114, and Ser-192.

This sequence belongs to the peptidase S1B family.

It localises to the secreted. This chain is Serine protease SplF (splF), found in Staphylococcus aureus (strain Mu50 / ATCC 700699).